Consider the following 327-residue polypeptide: Aspartate--ammonia ligase (327 aa).

Belongs to the class-II aminoacyl-tRNA synthetase family. AsnA subfamily.

The protein resides in the cytoplasm. The enzyme catalyses L-aspartate + NH4(+) + ATP = L-asparagine + AMP + diphosphate + H(+). The protein operates within amino-acid biosynthesis; L-asparagine biosynthesis; L-asparagine from L-aspartate (ammonia route): step 1/1. In Bacillus cytotoxicus (strain DSM 22905 / CIP 110041 / 391-98 / NVH 391-98), this protein is Aspartate--ammonia ligase.